Reading from the N-terminus, the 983-residue chain is UPF0182 protein KRH_08700 (983 aa).

Helical transmembrane passes span 22–42 (GALLPTVIAVVVLIALFVGFT), 67–87 (VIGLFVAAALIVAALMFLSLW), 116–136 (VVMVAVPLIFGLFAASTVATQ), 172–192 (LLIGFLVTALLLAGVAGLLMH), 213–233 (VHLGSIVAAFLALQAVNFWLD), 261–281 (GILAVAALLVAVLFVVAGFIG), and 288–308 (IGAAMLVVVAVVAGGLYPWAI). A disordered region spans residues 893-959 (GAKTDTGAGV…DKAMKDGDWT (67 aa)). Positions 947–959 (QDSDKAMKDGDWT) are enriched in basic and acidic residues.

This sequence belongs to the UPF0182 family.

The protein localises to the cell membrane. In Kocuria rhizophila (strain ATCC 9341 / DSM 348 / NBRC 103217 / DC2201), this protein is UPF0182 protein KRH_08700.